A 402-amino-acid polypeptide reads, in one-letter code: Pyridinium-3,5-bisthiocarboxylic acid mononucleotide nickel insertion protein (402 aa).

Belongs to the LarC family.

It carries out the reaction Ni(II)-pyridinium-3,5-bisthiocarboxylate mononucleotide = pyridinium-3,5-bisthiocarboxylate mononucleotide + Ni(2+). In terms of biological role, involved in the biosynthesis of a nickel-pincer cofactor ((SCS)Ni(II) pincer complex). Binds Ni(2+), and functions in nickel delivery to pyridinium-3,5-bisthiocarboxylic acid mononucleotide (P2TMN), to form the mature cofactor. Is thus probably required for the activation of nickel-pincer cofactor-dependent enzymes. The protein is Pyridinium-3,5-bisthiocarboxylic acid mononucleotide nickel insertion protein of Desulfitobacterium hafniense (strain DSM 10664 / DCB-2).